A 30-amino-acid chain; its full sequence is Thaumatin-like protein (30 aa).

The protein belongs to the thaumatin family.

It localises to the secreted. In terms of biological role, has antifungal activity against C.comatus, F.oxysporum and P.ostreatus. This is Thaumatin-like protein from Phaseolus vulgaris (Kidney bean).